The primary structure comprises 312 residues: Ribosomal RNA small subunit methyltransferase H (312 aa).

S-adenosyl-L-methionine is bound by residues 33 to 35 (AGH), D52, F79, D100, and Q107.

The protein belongs to the methyltransferase superfamily. RsmH family.

The protein localises to the cytoplasm. It carries out the reaction cytidine(1402) in 16S rRNA + S-adenosyl-L-methionine = N(4)-methylcytidine(1402) in 16S rRNA + S-adenosyl-L-homocysteine + H(+). Specifically methylates the N4 position of cytidine in position 1402 (C1402) of 16S rRNA. In Finegoldia magna (strain ATCC 29328 / DSM 20472 / WAL 2508) (Peptostreptococcus magnus), this protein is Ribosomal RNA small subunit methyltransferase H.